The chain runs to 46 residues: U1-plectoxin-Pt1f (46 aa).

Disulfide bonds link Cys4–Cys18, Cys11–Cys24, Cys17–Cys35, Cys21–Cys44, and Cys26–Cys33.

It belongs to the neurotoxin 02 (plectoxin) family. 02 (plectoxin) subfamily. In terms of tissue distribution, expressed by the venom gland.

It is found in the secreted. Functionally, potent toxin that may paralyze and/or kill insect pests such as H.virescens (lepidoptera), S.exigua (beet armyworm) and M.sexta (tobacco hornworm). This Plectreurys tristis (Spider) protein is U1-plectoxin-Pt1f.